The sequence spans 366 residues: Chorismate synthase (366 aa).

The NADP(+) site is built by Arg-48 and Arg-54. FMN-binding positions include Arg-132–Ser-134, Asn-244–Ala-245, Gly-289, Lys-304–Ser-308, and Arg-330.

It belongs to the chorismate synthase family. Homotetramer. FMNH2 is required as a cofactor.

It catalyses the reaction 5-O-(1-carboxyvinyl)-3-phosphoshikimate = chorismate + phosphate. Its pathway is metabolic intermediate biosynthesis; chorismate biosynthesis; chorismate from D-erythrose 4-phosphate and phosphoenolpyruvate: step 7/7. In terms of biological role, catalyzes the anti-1,4-elimination of the C-3 phosphate and the C-6 proR hydrogen from 5-enolpyruvylshikimate-3-phosphate (EPSP) to yield chorismate, which is the branch point compound that serves as the starting substrate for the three terminal pathways of aromatic amino acid biosynthesis. This reaction introduces a second double bond into the aromatic ring system. The sequence is that of Chorismate synthase from Methylorubrum extorquens (strain PA1) (Methylobacterium extorquens).